The primary structure comprises 191 residues: Endoribonuclease YbeY (191 aa).

Zn(2+) contacts are provided by His122, His126, and His132. The segment at 164-191 (QPKPSGPKAFPDAAERAELDKEVPGGGI) is disordered. A compositionally biased stretch (basic and acidic residues) spans 176–191 (AAERAELDKEVPGGGI).

Belongs to the endoribonuclease YbeY family. Requires Zn(2+) as cofactor.

The protein localises to the cytoplasm. Functionally, single strand-specific metallo-endoribonuclease involved in late-stage 70S ribosome quality control and in maturation of the 3' terminus of the 16S rRNA. This Corynebacterium aurimucosum (strain ATCC 700975 / DSM 44827 / CIP 107346 / CN-1) (Corynebacterium nigricans) protein is Endoribonuclease YbeY.